The following is a 413-amino-acid chain: Mitochondrial carrier protein MTM1 (413 aa).

3 Solcar repeats span residues 59–193, 205–305, and 318–406; these read IGFT…FRNR, MTFC…IKKR, and GVFG…VKYV. 6 helical membrane-spanning segments follow: residues 65–85, 170–190, 204–226, 284–304, 316–336, and 378–399; these read VFSA…LDVV, NAGL…YDMF, AMTF…TVCY, QLAR…PIKK, LVGV…IAAA, and LFMG…VVSF.

It belongs to the mitochondrial carrier (TC 2.A.29) family. Ubiquitous.

The protein resides in the mitochondrion inner membrane. Its function is as follows. Involved in the mitochondrial activation of MSD1 by specifically facilitating insertion of the essential manganese cofactor. Has the ability to activate iron regulon in an iron-dependent manner. This chain is Mitochondrial carrier protein MTM1 (MTM1), found in Arabidopsis thaliana (Mouse-ear cress).